Reading from the N-terminus, the 243-residue chain is Anti-H(O) lectin 2 (243 aa).

N-linked (GlcNAc...) asparagine glycosylation occurs at asparagine 115. Residues glutamate 127 and aspartate 129 each coordinate Mn(2+). Residues aspartate 129, asparagine 136, and aspartate 139 each contribute to the Ca(2+) site. Mn(2+) contacts are provided by aspartate 139 and histidine 144.

The protein belongs to the leguminous lectin family. In terms of assembly, homodimer.

Functionally, lactose- or galactose-binding anti-H(O) lectin. The protein is Anti-H(O) lectin 2 of Cytisophyllum sessilifolium (Sessile-leaved cytisus).